Consider the following 278-residue polypeptide: MTRDTIPLAGVIGDPISHSLSPRLHGHWLRRYGLQGHYVPLHVNHANLETVLRTLPLMGFVGVNVTLPHKEHVLSIADSVTDRAALIGAANTLTFTANEQIQADNTDGMGFLSNIRQALPGWSASAGPALVLGSGGAAKAIVSALVSDGAPVVHVANRTRARADGLKEQFGARVSPSDWTHIPDLIGDAALIVNTTSLGMAGQSPLSLDLSRLSPPTVVTDIVYAPLQTNLLRDASIRGCETVDGLGMLLHQAVPGFERWFNYTPTVDEDLREAVLAG.

Shikimate is bound by residues 19 to 21 (SLS) and Thr66. Residue Lys70 is the Proton acceptor of the active site. Asp82 contributes to the NADP(+) binding site. Shikimate-binding residues include Asn91 and Asp107. Residues 133 to 137 (GSGGA), 157 to 162 (NRTRAR), and Ile222 contribute to the NADP(+) site. Residue Tyr224 coordinates shikimate. Gly245 contributes to the NADP(+) binding site.

This sequence belongs to the shikimate dehydrogenase family. Homodimer.

It catalyses the reaction shikimate + NADP(+) = 3-dehydroshikimate + NADPH + H(+). The protein operates within metabolic intermediate biosynthesis; chorismate biosynthesis; chorismate from D-erythrose 4-phosphate and phosphoenolpyruvate: step 4/7. Functionally, involved in the biosynthesis of the chorismate, which leads to the biosynthesis of aromatic amino acids. Catalyzes the reversible NADPH linked reduction of 3-dehydroshikimate (DHSA) to yield shikimate (SA). The chain is Shikimate dehydrogenase (NADP(+)) from Jannaschia sp. (strain CCS1).